The following is a 273-amino-acid chain: Undecaprenyl-diphosphatase (273 aa).

A run of 7 helical transmembrane segments spans residues 6–26 (SLLI…LPVS), 45–65 (AKTF…VMFW), 90–110 (LTLI…LLFH), 116–136 (LFNP…LIAA), 190–210 (YAAS…ATAL), 222–242 (GDIP…LIAI), and 252–272 (ISFI…YVVF).

The protein belongs to the UppP family.

The protein resides in the cell inner membrane. It carries out the reaction di-trans,octa-cis-undecaprenyl diphosphate + H2O = di-trans,octa-cis-undecaprenyl phosphate + phosphate + H(+). Functionally, catalyzes the dephosphorylation of undecaprenyl diphosphate (UPP). Confers resistance to bacitracin. This Escherichia coli O127:H6 (strain E2348/69 / EPEC) protein is Undecaprenyl-diphosphatase.